Consider the following 274-residue polypeptide: Large ribosomal subunit protein uL2cz/uL2cy (274 aa).

Disordered regions lie at residues 1–24 and 223–274; these read MAIH…QVKS and MNPV…RRSK. Positions 7-24 are enriched in polar residues; it reads KTSTPSTRNGTVDSQVKS.

Belongs to the universal ribosomal protein uL2 family. As to quaternary structure, part of the 50S ribosomal subunit.

Its subcellular location is the plastid. The protein localises to the chloroplast. The sequence is that of Large ribosomal subunit protein uL2cz/uL2cy (rpl2-A) from Nicotiana sylvestris (Wood tobacco).